A 218-amino-acid chain; its full sequence is Putative inactive cathepsin L-like protein CTSL3P (218 aa).

Disordered stretches follow at residues 144–173 (GDWK…EVAQ) and 195–218 (GDED…EAQV). Basic and acidic residues predominate over residues 201–212 (EDKWPHDMRNHL).

It belongs to the peptidase C1 family.

The protein is Putative inactive cathepsin L-like protein CTSL3P (CTSL3P) of Homo sapiens (Human).